Consider the following 356-residue polypeptide: Heparan sulfate 2-O-sulfotransferase 1 (356 aa).

At 1–11 (MGLLRIMMPPK) the chain is on the cytoplasmic side. A helical; Signal-anchor for type II membrane protein transmembrane segment spans residues 12 to 28 (LQLLAVVAFAVAMLFLE). A coiled-coil region spans residues 24–51 (MLFLENQIQKLEESRAKLERAIARHEVR). Residues 29–356 (NQIQKLEESR…FYEKIYPKSN (328 aa)) are Lumenal-facing. Residues Lys83, Thr84, Ala85, Ser86, Thr87, and Ser88 each contribute to the adenosine 3',5'-bisphosphate site. N-linked (GlcNAc...) asparagine glycosylation is found at Asn108 and Asn127. Active-site residues include His140 and His142. Adenosine 3',5'-bisphosphate-binding residues include Arg164 and Ser172. 2 disulfide bridges follow: Cys201-Cys209 and Cys222-Cys228. Adenosine 3',5'-bisphosphate is bound by residues Tyr279, Ser285, Thr290, and Lys293.

The protein belongs to the sulfotransferase 3 family. In terms of assembly, homotrimer. Interacts with the C5-epimerase GLCE. N-glycosylated.

The protein resides in the golgi apparatus membrane. Functionally, catalyzes the transfer of a sulfo group from 3'-phospho-5'-adenylyl sulfate (PAPS) to the 2-OH position of iduronic acid (IdoA) or glucuronic acid (GlcA) within the heparan sulfate (HS) chain and participates in HS biosynthesis. Required for metanephric development of kidney formation, suggesting that 2-O-sulfation within HS is essential for signaling between ureteric bud and metanephric mesenchyme. The sequence is that of Heparan sulfate 2-O-sulfotransferase 1 from Cricetulus griseus (Chinese hamster).